A 359-amino-acid chain; its full sequence is MEIKVLECLKRLEEVEKQISDPNIFSNPKEYSSLSKEHARLSEIKNAHESLVATKKILQDDKLALSTEKDPEIVAMLEEGVLVGEEAVERLSKQLENLLIPPDPDDDLSVIMELRAGTGGDEAALFVGDCVRMYHLYAASKGWQCEVLSTSESDLGGYKEYVMGISGASVKRFLQYEAGTHRVQRVPETETQGRVHTSAVTVAVLPEPAEDDEEVFIDEKDLRIDTFRSSGAGGQHVNVTDSAVRITHIPSGVVVTCQDERSQHKNKAKAMRVLKARIRDAEVQKRAQEASAMRSAQVGSGDRSERIRTYNFPQNRVTDHRIGLTLYNLDRVMEGELDMITTALVTHVHRQLFGHEETA.

Gln-235 is modified (N5-methylglutamine). Positions Ala-287–Phe-312 are disordered.

It belongs to the prokaryotic/mitochondrial release factor family. Methylated by PrmC. Methylation increases the termination efficiency of RF1.

It localises to the cytoplasm. Its function is as follows. Peptide chain release factor 1 directs the termination of translation in response to the peptide chain termination codons UAG and UAA. The chain is Peptide chain release factor 1 from Chlamydia trachomatis serovar A (strain ATCC VR-571B / DSM 19440 / HAR-13).